The following is a 424-amino-acid chain: 3-isopropylmalate dehydratase large subunit 2 (424 aa).

The [4Fe-4S] cluster site is built by C299, C359, and C362.

The protein belongs to the aconitase/IPM isomerase family. LeuC type 2 subfamily. In terms of assembly, heterodimer of LeuC and LeuD. [4Fe-4S] cluster is required as a cofactor.

The enzyme catalyses (2R,3S)-3-isopropylmalate = (2S)-2-isopropylmalate. It participates in amino-acid biosynthesis; L-leucine biosynthesis; L-leucine from 3-methyl-2-oxobutanoate: step 2/4. Its function is as follows. Catalyzes the isomerization between 2-isopropylmalate and 3-isopropylmalate, via the formation of 2-isopropylmaleate. The protein is 3-isopropylmalate dehydratase large subunit 2 of Rubrobacter xylanophilus (strain DSM 9941 / JCM 11954 / NBRC 16129 / PRD-1).